The primary structure comprises 120 residues: Small ribosomal subunit protein uS13 (120 aa).

Positions 93–120 (RRGLPCRGQKTKTNARTRKGKRKTVGAA) are disordered.

This sequence belongs to the universal ribosomal protein uS13 family. In terms of assembly, part of the 30S ribosomal subunit. Forms a loose heterodimer with protein S19. Forms two bridges to the 50S subunit in the 70S ribosome.

Functionally, located at the top of the head of the 30S subunit, it contacts several helices of the 16S rRNA. In the 70S ribosome it contacts the 23S rRNA (bridge B1a) and protein L5 of the 50S subunit (bridge B1b), connecting the 2 subunits; these bridges are implicated in subunit movement. Contacts the tRNAs in the A and P-sites. The chain is Small ribosomal subunit protein uS13 from Sulfurovum sp. (strain NBC37-1).